We begin with the raw amino-acid sequence, 451 residues long: UDP-glycosyltransferase 76E11 (451 aa).

Residues Ser273, 332 to 334 (APQ), 349 to 357 (HCGWNSTLE), and 371 to 374 (SSDQ) each bind UDP-alpha-D-glucose.

Belongs to the UDP-glycosyltransferase family.

Functionally, possesses low quercetin 3-O-glucosyltransferase and 7-O-glucosyltransferase activities in vitro. In Arabidopsis thaliana (Mouse-ear cress), this protein is UDP-glycosyltransferase 76E11 (UGT76E11).